A 317-amino-acid chain; its full sequence is tRNA dimethylallyltransferase (317 aa).

19 to 26 (GPTASGKS) contributes to the ATP binding site. 21 to 26 (TASGKS) serves as a coordination point for substrate. The tract at residues 44–47 (DSMQ) is interaction with substrate tRNA.

The protein belongs to the IPP transferase family. As to quaternary structure, monomer. The cofactor is Mg(2+).

It carries out the reaction adenosine(37) in tRNA + dimethylallyl diphosphate = N(6)-dimethylallyladenosine(37) in tRNA + diphosphate. Functionally, catalyzes the transfer of a dimethylallyl group onto the adenine at position 37 in tRNAs that read codons beginning with uridine, leading to the formation of N6-(dimethylallyl)adenosine (i(6)A). The polypeptide is tRNA dimethylallyltransferase (Methylorubrum extorquens (strain PA1) (Methylobacterium extorquens)).